Reading from the N-terminus, the 335-residue chain is Glutaredoxin-3 (335 aa).

At alanine 2 the chain carries N-acetylalanine. The 116-residue stretch at 2–117 (AAGAAEAAVA…LTKKVQRHAS (116 aa)) folds into the Thioredoxin domain. Residues serine 117 and serine 120 each carry the phosphoserine modification. 2 Glutaredoxin domains span residues 144 to 236 (APCM…PKLE) and 237 to 335 (ERLK…RGEN). The [2Fe-2S] cluster site is built by cysteine 159 and cysteine 261.

As to quaternary structure, homodimer; the homodimer is independent of 2Fe-2S clusters. Heterotrimer; forms a heterotrimeric complex composed by two BOLA2 molecules and one GLRX3 molecule; linked by [2Fe-2S] clusters. Interacts (via N-terminus) with PRKCQ/PKC-theta. Interacts (via C-terminus) with CSRP3. Interacts with CSRP2. Expressed in heart, spleen, testis and, to a lower extent, in thymus and peripheral blood leukocytes. Weakly expressed in lung, placenta, colon and small intestine.

Its subcellular location is the cytoplasm. It is found in the cytosol. The protein localises to the cell cortex. The protein resides in the myofibril. It localises to the sarcomere. Its subcellular location is the z line. Together with BOLA2, acts as a cytosolic iron-sulfur (Fe-S) cluster assembly factor that facilitates [2Fe-2S] cluster insertion into a subset of cytosolic proteins. Acts as a critical negative regulator of cardiac hypertrophy and a positive inotropic regulator. Required for hemoglobin maturation. Does not possess any thyoredoxin activity since it lacks the conserved motif that is essential for catalytic activity. The chain is Glutaredoxin-3 (GLRX3) from Homo sapiens (Human).